The following is a 358-amino-acid chain: Probable branched-chain-amino-acid aminotransferase (358 aa).

The residue at position 196 (Lys196) is an N6-(pyridoxal phosphate)lysine.

It belongs to the class-IV pyridoxal-phosphate-dependent aminotransferase family. The cofactor is pyridoxal 5'-phosphate.

The enzyme catalyses L-leucine + 2-oxoglutarate = 4-methyl-2-oxopentanoate + L-glutamate. It carries out the reaction L-isoleucine + 2-oxoglutarate = (S)-3-methyl-2-oxopentanoate + L-glutamate. It catalyses the reaction L-valine + 2-oxoglutarate = 3-methyl-2-oxobutanoate + L-glutamate. It functions in the pathway amino-acid biosynthesis; L-isoleucine biosynthesis; L-isoleucine from 2-oxobutanoate: step 4/4. Its pathway is amino-acid biosynthesis; L-leucine biosynthesis; L-leucine from 3-methyl-2-oxobutanoate: step 4/4. The protein operates within amino-acid biosynthesis; L-valine biosynthesis; L-valine from pyruvate: step 4/4. In terms of biological role, acts on leucine, isoleucine and valine. The polypeptide is Probable branched-chain-amino-acid aminotransferase (ilvE) (Staphylococcus epidermidis (strain ATCC 35984 / DSM 28319 / BCRC 17069 / CCUG 31568 / BM 3577 / RP62A)).